Reading from the N-terminus, the 603-residue chain is Elongation factor 4 (603 aa).

The region spanning 7–191 (DNIRNFSIVA…AIVTRLPPPQ (185 aa)) is the tr-type G domain. GTP contacts are provided by residues 19-24 (DHGKST) and 138-141 (NKVD).

The protein belongs to the TRAFAC class translation factor GTPase superfamily. Classic translation factor GTPase family. LepA subfamily.

It localises to the cell inner membrane. It catalyses the reaction GTP + H2O = GDP + phosphate + H(+). In terms of biological role, required for accurate and efficient protein synthesis under certain stress conditions. May act as a fidelity factor of the translation reaction, by catalyzing a one-codon backward translocation of tRNAs on improperly translocated ribosomes. Back-translocation proceeds from a post-translocation (POST) complex to a pre-translocation (PRE) complex, thus giving elongation factor G a second chance to translocate the tRNAs correctly. Binds to ribosomes in a GTP-dependent manner. The polypeptide is Elongation factor 4 (Rhodopseudomonas palustris (strain HaA2)).